Here is a 283-residue protein sequence, read N- to C-terminus: Protease HtpX (283 aa).

Helical transmembrane passes span 4 to 24 and 33 to 53; these read ILLFLATNMAVMLVLGIILSV and GGILIMALLFGFAGSLISLFL. Position 139 (histidine 139) interacts with Zn(2+). Glutamate 140 is an active-site residue. Histidine 143 provides a ligand contact to Zn(2+). The next 2 helical transmembrane spans lie at 147–167 and 190–210; these read GDMVTMALLQGVLNTFVIFLS and IYFLVSMVLEMLFGVLASIIA. Glutamate 218 contributes to the Zn(2+) binding site.

Belongs to the peptidase M48B family. Zn(2+) is required as a cofactor.

The protein resides in the cell inner membrane. In Haemophilus influenzae (strain PittGG), this protein is Protease HtpX.